A 207-amino-acid chain; its full sequence is Serotype 2 fimbrial subunit (207 aa).

The signal sequence occupies residues 1-26 (MQIPFQRALRLCLRAALAAIASAAHA). Cysteine 42 and cysteine 85 are oxidised to a cystine.

It belongs to the fimbrial protein family.

Its subcellular location is the fimbrium. Its function is as follows. Bordetella pertussis is the causative agent of whooping cough. An essential step in the disease process is the attachment of the bacteria to the ciliated epithelium of the respiratory tract, enabling the organism to resist normal host-clearance mechanisms. It is unclear which bacterial cell surface component are responsible for adherence but the fimbriae of B.pertussis are prime candidates for being involved in this process. This is Serotype 2 fimbrial subunit (fim2) from Bordetella pertussis (strain Tohama I / ATCC BAA-589 / NCTC 13251).